The following is a 286-amino-acid chain: Shikimate dehydrogenase (NADP(+)) (286 aa).

Shikimate is bound by residues 19 to 21 (SVS) and T66. K70 serves as the catalytic Proton acceptor. 2 residues coordinate shikimate: N91 and D106. Residues 130–134 (GAGGS) and A225 contribute to the NADP(+) site. Y227 lines the shikimate pocket. G248 serves as a coordination point for NADP(+).

The protein belongs to the shikimate dehydrogenase family. As to quaternary structure, homodimer.

The catalysed reaction is shikimate + NADP(+) = 3-dehydroshikimate + NADPH + H(+). It participates in metabolic intermediate biosynthesis; chorismate biosynthesis; chorismate from D-erythrose 4-phosphate and phosphoenolpyruvate: step 4/7. Its function is as follows. Involved in the biosynthesis of the chorismate, which leads to the biosynthesis of aromatic amino acids. Catalyzes the reversible NADPH linked reduction of 3-dehydroshikimate (DHSA) to yield shikimate (SA). The polypeptide is Shikimate dehydrogenase (NADP(+)) (Dehalococcoides mccartyi (strain ATCC BAA-2100 / JCM 16839 / KCTC 5957 / BAV1)).